The primary structure comprises 505 residues: ATP synthase subunit alpha (505 aa).

170-177 (GDRQTGKT) contributes to the ATP binding site.

The protein belongs to the ATPase alpha/beta chains family. In terms of assembly, F-type ATPases have 2 components, CF(1) - the catalytic core - and CF(0) - the membrane proton channel. CF(1) has five subunits: alpha(3), beta(3), gamma(1), delta(1), epsilon(1). CF(0) has four main subunits: a(1), b(1), b'(1) and c(9-12).

It is found in the cellular thylakoid membrane. The catalysed reaction is ATP + H2O + 4 H(+)(in) = ADP + phosphate + 5 H(+)(out). In terms of biological role, produces ATP from ADP in the presence of a proton gradient across the membrane. The alpha chain is a regulatory subunit. This chain is ATP synthase subunit alpha, found in Synechococcus sp. (strain ATCC 27144 / PCC 6301 / SAUG 1402/1) (Anacystis nidulans).